Consider the following 232-residue polypeptide: Sugar fermentation stimulation protein homolog (232 aa).

This sequence belongs to the SfsA family.

The polypeptide is Sugar fermentation stimulation protein homolog (Alkaliphilus metalliredigens (strain QYMF)).